Here is a 371-residue protein sequence, read N- to C-terminus: uncharacterized protein (371 aa).

The protein to A.pernix APE_1804 and S.solfataricus SSO2105.

This is an uncharacterized protein from Aeropyrum pernix (strain ATCC 700893 / DSM 11879 / JCM 9820 / NBRC 100138 / K1).